The chain runs to 570 residues: Proline--tRNA ligase (570 aa).

The protein belongs to the class-II aminoacyl-tRNA synthetase family. ProS type 1 subfamily. Homodimer.

It is found in the cytoplasm. It carries out the reaction tRNA(Pro) + L-proline + ATP = L-prolyl-tRNA(Pro) + AMP + diphosphate. Catalyzes the attachment of proline to tRNA(Pro) in a two-step reaction: proline is first activated by ATP to form Pro-AMP and then transferred to the acceptor end of tRNA(Pro). As ProRS can inadvertently accommodate and process non-cognate amino acids such as alanine and cysteine, to avoid such errors it has two additional distinct editing activities against alanine. One activity is designated as 'pretransfer' editing and involves the tRNA(Pro)-independent hydrolysis of activated Ala-AMP. The other activity is designated 'posttransfer' editing and involves deacylation of mischarged Ala-tRNA(Pro). The misacylated Cys-tRNA(Pro) is not edited by ProRS. This is Proline--tRNA ligase from Acidithiobacillus ferrooxidans (strain ATCC 23270 / DSM 14882 / CIP 104768 / NCIMB 8455) (Ferrobacillus ferrooxidans (strain ATCC 23270)).